Reading from the N-terminus, the 379-residue chain is Cytochrome b (379 aa).

Helical transmembrane passes span 32 to 52, 76 to 98, 111 to 131, and 177 to 197; these read YGSLLGLVLVIQLITGIVLAT, WLLRLVHSTGASFFFLFIYLHIG, VWNIGVLIYLILMGTAFLGYV, and FFALHYLLPFVVTALVILHIF. Heme b contacts are provided by His-82 and His-96. Heme b is bound by residues His-181 and His-195. His-200 contacts a ubiquinone. Helical transmembrane passes span 223-243, 287-304, 320-340, and 348-367; these read YSVKDLYVYFVFFFVFMVFTL, LGGVVGLLLAVLVLFLFS, LARLLYWSLVSNFFLLTWLGS, and NEVALVATVTYFTFMLTMCA.

Belongs to the cytochrome b family. In terms of assembly, the main subunits of complex b-c1 are: cytochrome b, cytochrome c1 and the Rieske protein. Heme b is required as a cofactor.

It localises to the mitochondrion inner membrane. In terms of biological role, component of the ubiquinol-cytochrome c reductase complex (complex III or cytochrome b-c1 complex) that is part of the mitochondrial respiratory chain. The b-c1 complex mediates electron transfer from ubiquinol to cytochrome c. Contributes to the generation of a proton gradient across the mitochondrial membrane that is then used for ATP synthesis. The polypeptide is Cytochrome b (mt:Cyt-b) (Brachionus plicatilis (Marine rotifer)).